The sequence spans 391 residues: 3-ketoacyl-CoA thiolase (391 aa).

Cys90 serves as the catalytic Acyl-thioester intermediate. Residues His347 and Cys377 each act as proton acceptor in the active site.

It belongs to the thiolase-like superfamily. Thiolase family.

It carries out the reaction an acyl-CoA + acetyl-CoA = a 3-oxoacyl-CoA + CoA. The protein operates within lipid metabolism; fatty acid beta-oxidation. Functionally, involved in the degradation of long-chain fatty acids. The protein is 3-ketoacyl-CoA thiolase (fadA) of Bacillus subtilis (strain 168).